We begin with the raw amino-acid sequence, 240 residues long: Methylthioribulose-1-phosphate dehydratase (240 aa).

Positions Met1 to Asn10 are enriched in basic and acidic residues. Positions Met1 to Glu20 are disordered. Substrate is bound at residue Cys100. Zn(2+) is bound by residues His117 and His119. Glu146 (proton donor/acceptor) is an active-site residue. His202 contributes to the Zn(2+) binding site.

The protein belongs to the aldolase class II family. MtnB subfamily. Zn(2+) serves as cofactor.

It localises to the cytoplasm. It carries out the reaction 5-(methylsulfanyl)-D-ribulose 1-phosphate = 5-methylsulfanyl-2,3-dioxopentyl phosphate + H2O. Its pathway is amino-acid biosynthesis; L-methionine biosynthesis via salvage pathway; L-methionine from S-methyl-5-thio-alpha-D-ribose 1-phosphate: step 2/6. Functionally, catalyzes the dehydration of methylthioribulose-1-phosphate (MTRu-1-P) into 2,3-diketo-5-methylthiopentyl-1-phosphate (DK-MTP-1-P). The protein is Methylthioribulose-1-phosphate dehydratase of Aspergillus fumigatus (strain CBS 144.89 / FGSC A1163 / CEA10) (Neosartorya fumigata).